We begin with the raw amino-acid sequence, 417 residues long: NADH-quinone oxidoreductase subunit D (417 aa).

Belongs to the complex I 49 kDa subunit family. NDH-1 is composed of 14 different subunits. Subunits NuoB, C, D, E, F, and G constitute the peripheral sector of the complex.

The protein resides in the cell membrane. The enzyme catalyses a quinone + NADH + 5 H(+)(in) = a quinol + NAD(+) + 4 H(+)(out). Its function is as follows. NDH-1 shuttles electrons from NADH, via FMN and iron-sulfur (Fe-S) centers, to quinones in the respiratory chain. The immediate electron acceptor for the enzyme in this species is believed to be ubiquinone. Couples the redox reaction to proton translocation (for every two electrons transferred, four hydrogen ions are translocated across the cytoplasmic membrane), and thus conserves the redox energy in a proton gradient. The protein is NADH-quinone oxidoreductase subunit D of Polynucleobacter asymbioticus (strain DSM 18221 / CIP 109841 / QLW-P1DMWA-1) (Polynucleobacter necessarius subsp. asymbioticus).